A 457-amino-acid polypeptide reads, in one-letter code: Proton-translocating ferredoxin:NAD(+) oxidoreductase complex subunit C (457 aa).

4Fe-4S ferredoxin-type domains are found at residues 353–386 (TKND…MLSI) and 396–427 (AKEE…YIRY). [4Fe-4S] cluster is bound by residues C365, C368, C371, C375, C405, C408, C411, and C415. The segment at 433 to 457 (RAAGEREKAKAAKAKEKKEKEEVLK) is disordered.

The protein belongs to the 4Fe4S bacterial-type ferredoxin family. RnfC subfamily. The complex is composed of six subunits: RnfA, RnfB, RnfC, RnfD, RnfE and RnfG. [4Fe-4S] cluster serves as cofactor.

The protein resides in the cell membrane. Its function is as follows. Part of a membrane-bound complex that couples electron transfer with translocation of ions across the membrane. Couples electron transfer from reduced ferredoxin to NAD(+) with translocation of H(+) out of the cell. Essential for energy conservation during autotrophic growth. Contributes to ATP synthesis during heterotrophic growth. This chain is Proton-translocating ferredoxin:NAD(+) oxidoreductase complex subunit C, found in Clostridium ljungdahlii (strain ATCC 55383 / DSM 13528 / PETC).